Here is a 635-residue protein sequence, read N- to C-terminus: Threonine--tRNA ligase (635 aa).

In terms of domain architecture, TGS spans 1–61 (MITVRLPDGS…EKDSDLAIIT (61 aa)). The interval 242–533 (DHRKLGKQLD…LIEHYAGALP (292 aa)) is catalytic. Zn(2+) contacts are provided by C333, H384, and H510.

It belongs to the class-II aminoacyl-tRNA synthetase family. Homodimer. The cofactor is Zn(2+).

It localises to the cytoplasm. The catalysed reaction is tRNA(Thr) + L-threonine + ATP = L-threonyl-tRNA(Thr) + AMP + diphosphate + H(+). Catalyzes the attachment of threonine to tRNA(Thr) in a two-step reaction: L-threonine is first activated by ATP to form Thr-AMP and then transferred to the acceptor end of tRNA(Thr). Also edits incorrectly charged L-seryl-tRNA(Thr). The sequence is that of Threonine--tRNA ligase from Janthinobacterium sp. (strain Marseille) (Minibacterium massiliensis).